Consider the following 414-residue polypeptide: MNLQRYWGEIPISSSQTNRSSFDLLPREFRLVEVHDPPLHQPSANKPKPPTMLDIPSEPCSLTIHTIQLIQHNRRLRNLIATAQAQNQQQTEGVKTEESEPLPSCPGSPPLPDDLLPLDCKNPNAPFQIRHSDPESDFYRGKGEPVTELSWHSCRQLLYQAVATILAHAGFDCANESVLETLTDVAHEYCLKFTKLLRFAVDREARLGQTPFPDVMEQVFHEVGIGSVLSLQKFWQHRIKDYHSYMLQISKQLSEEYERIVNPEKATEDAKPVKIKEEPVSDITFPVSEELEADLASGDQSLPMGVLGAQSERFPSNLEVEASPQASSAEVNASPLWNLAHVKMEPQESEEGNVSGHGVLGSDVFEEPMSGMSEAGIPQSPDDSDSSYGSHSTDSLMGSSPVFNQRCKKRMRKI.

The tract at residues 87–108 (NQQQTEGVKTEESEPLPSCPGS) is disordered. Residue Ser-108 is modified to Phosphoserine. Lys-271 participates in a covalent cross-link: Glycyl lysine isopeptide (Lys-Gly) (interchain with G-Cter in SUMO2). A phosphoserine mark is found at Ser-323 and Ser-334. The segment at 346 to 414 (PQESEEGNVS…QRCKKRMRKI (69 aa)) is disordered. Positions 386 to 395 (SSYGSHSTDS) are enriched in low complexity.

Component of the STAGA transcription coactivator-HAT complex, at least composed of SUPT3H, SUPT7L, GCN5L2, TAF5L, TAF6L, TADA3L, TAD1L, TAF10, TAF12 and TAF9. Sumoylated. In terms of tissue distribution, expressed at high levels in adenocarcinomas and gliomas and low in esophageal cancers and malignant hematological disease. Also expressed at high level in the thymus, low in peripheral blood mononuclear cells, and lowest in the stomach, small intestine, and skeletal muscle.

It is found in the nucleus. The chain is STAGA complex 65 subunit gamma (SUPT7L) from Homo sapiens (Human).